Consider the following 273-residue polypeptide: 2,3,4,5-tetrahydropyridine-2,6-dicarboxylate N-succinyltransferase (273 aa).

Residues Arg106 and Asp143 each coordinate substrate.

The protein belongs to the transferase hexapeptide repeat family. In terms of assembly, homotrimer.

The protein localises to the cytoplasm. It catalyses the reaction (S)-2,3,4,5-tetrahydrodipicolinate + succinyl-CoA + H2O = (S)-2-succinylamino-6-oxoheptanedioate + CoA. It functions in the pathway amino-acid biosynthesis; L-lysine biosynthesis via DAP pathway; LL-2,6-diaminopimelate from (S)-tetrahydrodipicolinate (succinylase route): step 1/3. This is 2,3,4,5-tetrahydropyridine-2,6-dicarboxylate N-succinyltransferase from Wolbachia pipientis wMel.